The following is a 732-amino-acid chain: Acylamino-acid-releasing enzyme (732 aa).

Position 1 is an N-acetylmethionine (Met1). Ser187 bears the Phosphoserine mark. Residues Ser587, Asp675, and His707 each act as charge relay system in the active site.

Belongs to the peptidase S9C family. As to quaternary structure, homotetramer. Expressed in the liver (at protein level).

The protein localises to the cytoplasm. It carries out the reaction Cleavage of an N-acetyl or N-formyl amino acid from the N-terminus of a polypeptide.. With respect to regulation, homotetramerization is required for activity. Tetramerization results in the formation of a gated channel which is involved in substrate selection and substrate access to the catalytic sites. Its function is as follows. This enzyme catalyzes the hydrolysis of the N-terminal peptide bond of an N-acetylated peptide to generate an N-acetylated amino acid and a peptide with a free N-terminus. It preferentially cleaves off Ac-Ala, Ac-Met and Ac-Ser. Also, involved in the degradation of oxidized and glycated proteins. This Sus scrofa (Pig) protein is Acylamino-acid-releasing enzyme (APEH).